A 199-amino-acid chain; its full sequence is 7-methyl-GTP pyrophosphatase (199 aa).

Aspartate 76 serves as the catalytic Proton acceptor.

The protein belongs to the Maf family. YceF subfamily. A divalent metal cation is required as a cofactor.

Its subcellular location is the cytoplasm. The catalysed reaction is N(7)-methyl-GTP + H2O = N(7)-methyl-GMP + diphosphate + H(+). Its function is as follows. Nucleoside triphosphate pyrophosphatase that hydrolyzes 7-methyl-GTP (m(7)GTP). May have a dual role in cell division arrest and in preventing the incorporation of modified nucleotides into cellular nucleic acids. In Nitrosococcus oceani (strain ATCC 19707 / BCRC 17464 / JCM 30415 / NCIMB 11848 / C-107), this protein is 7-methyl-GTP pyrophosphatase.